A 538-amino-acid chain; its full sequence is Capsular polysaccharide biosynthesis protein RkpI (538 aa).

The next 6 helical transmembrane spans lie at 16–36, 70–90, 114–134, 139–159, 170–190, and 212–232; these read LHDYPIALTLGCYLLSCAVIF, VIALVFAGFFAISWRPLYAAA, LVFSDIALVADVFKYKTIFYA, IVFWIVAFLYVFGVSALYMYF, LFWVLVMVGIAAGPWGLLFYG, and NTVRFGTFASVVFHFIIWLGV.

Its subcellular location is the cell membrane. It functions in the pathway capsule biogenesis; capsule polysaccharide biosynthesis. Involved in antigen K (capsular polysaccharide) biosynthesis. The sequence is that of Capsular polysaccharide biosynthesis protein RkpI (rkpI) from Rhizobium meliloti (strain 1021) (Ensifer meliloti).